We begin with the raw amino-acid sequence, 176 residues long: ATP-dependent protease subunit HslV (176 aa).

The active site involves T2. Residues G157, C160, and T163 each coordinate Na(+).

This sequence belongs to the peptidase T1B family. HslV subfamily. In terms of assembly, a double ring-shaped homohexamer of HslV is capped on each side by a ring-shaped HslU homohexamer. The assembly of the HslU/HslV complex is dependent on binding of ATP.

Its subcellular location is the cytoplasm. The catalysed reaction is ATP-dependent cleavage of peptide bonds with broad specificity.. Allosterically activated by HslU binding. Protease subunit of a proteasome-like degradation complex believed to be a general protein degrading machinery. This chain is ATP-dependent protease subunit HslV, found in Marinobacter nauticus (strain ATCC 700491 / DSM 11845 / VT8) (Marinobacter aquaeolei).